A 79-amino-acid polypeptide reads, in one-letter code: Small ribosomal subunit protein bS18 (79 aa).

It belongs to the bacterial ribosomal protein bS18 family. Part of the 30S ribosomal subunit. Forms a tight heterodimer with protein bS6.

Functionally, binds as a heterodimer with protein bS6 to the central domain of the 16S rRNA, where it helps stabilize the platform of the 30S subunit. The chain is Small ribosomal subunit protein bS18 from Latilactobacillus sakei subsp. sakei (strain 23K) (Lactobacillus sakei subsp. sakei).